Here is a 254-residue protein sequence, read N- to C-terminus: Probable transcriptional regulatory protein Cyan7425_4347 (254 aa).

The protein belongs to the TACO1 family.

The protein resides in the cytoplasm. This Cyanothece sp. (strain PCC 7425 / ATCC 29141) protein is Probable transcriptional regulatory protein Cyan7425_4347.